A 330-amino-acid chain; its full sequence is Mas-related G-protein coupled receptor member B8 (330 aa).

Topologically, residues 1 to 33 (MDSSFPDWNIEFREQNESYFMESSSCDMSLAMS) are extracellular. N-linked (GlcNAc...) asparagine glycosylation occurs at Asn16. Residues 34 to 54 (LLSIIIAIIGLTGNVIVLQLL) traverse the membrane as a helical segment. At 55 to 62 (GFHMHRNA) the chain is on the cytoplasmic side. The helical transmembrane segment at 63–83 (FSVYIFNLSGANFLFLCTHIV) threads the bilayer. The Extracellular portion of the chain corresponds to 84–101 (FSLENLIRQFHYIDIHMA). The chain crosses the membrane as a helical span at residues 102-122 (LFSVNVTILAYLAGVSMITAI). Over 123–146 (SVEYWLSVLWPTWYHAQRPKHTST) the chain is Cytoplasmic. The chain crosses the membrane as a helical span at residues 147–167 (VICTLLWVFSLLLTLWNWIIC). Residues 168 to 177 (KVLDYIYNWD) are Extracellular-facing. The helical transmembrane segment at 178–198 (MCWKLALIIVVWLLVLFVVLS) threads the bilayer. The Cytoplasmic segment spans residues 199 to 219 (RSNQALLFRVFCGSQQTPVTR). A helical transmembrane segment spans residues 220–240 (LLVTIMLTALVVLICGFGIGI). Over 241–260 (CFFYWKKEENSIMPCGYFYE) the chain is Extracellular. A helical membrane pass occupies residues 261-281 (TILLLSGVNSCANPIICLFVG). Residues 282–330 (SIKHCQFQCGTLRLILQRAIQESPEEEDEEVEEVVEQEGGEEDEESTTL) lie on the Cytoplasmic side of the membrane. The tract at residues 302–330 (QESPEEEDEEVEEVVEQEGGEEDEESTTL) is disordered. The segment covering 304–330 (SPEEEDEEVEEVVEQEGGEEDEESTTL) has biased composition (acidic residues).

The protein belongs to the G-protein coupled receptor 1 family. Mas subfamily.

The protein localises to the membrane. Orphan receptor. Probably involved in the function of nociceptive neurons. May regulate nociceptor function and/or development, including the sensation or modulation of pain. In Mus musculus (Mouse), this protein is Mas-related G-protein coupled receptor member B8 (Mrgprb8).